Here is a 450-residue protein sequence, read N- to C-terminus: Tubulin alpha-1 chain (450 aa).

Glutamine 11 lines the GTP pocket. Position 40 is an N6-acetyllysine (lysine 40). Residues glutamate 71, serine 140, glycine 144, threonine 145, threonine 179, asparagine 206, and asparagine 228 each coordinate GTP. Glutamate 71 lines the Mg(2+) pocket. Glutamate 254 is an active-site residue.

Belongs to the tubulin family. As to quaternary structure, dimer of alpha and beta chains. A typical microtubule is a hollow water-filled tube with an outer diameter of 25 nm and an inner diameter of 15 nM. Alpha-beta heterodimers associate head-to-tail to form protofilaments running lengthwise along the microtubule wall with the beta-tubulin subunit facing the microtubule plus end conferring a structural polarity. Microtubules usually have 13 protofilaments but different protofilament numbers can be found in some organisms and specialized cells. Interacts with Ote. It depends on Mg(2+) as a cofactor. Post-translationally, undergoes a tyrosination/detyrosination cycle, the cyclic removal and re-addition of a C-terminal tyrosine residue by the enzymes tubulin tyrosine carboxypeptidase (TTCP) and tubulin tyrosine ligase (TTL), respectively. In terms of processing, acetylation of alpha chains at Lys-40 stabilizes microtubules and affects affinity and processivity of microtubule motors. This modification has a role in multiple cellular functions, ranging from cell motility, cell cycle progression or cell differentiation to intracellular trafficking and signaling. During the early stages of oogenesis lky/Alpha-tubulin N-acetyltransferase 2 is the main acetyltransferase responsible for Lys-40 acetylation in germline cells while Atat/alpha-tubulin N-acetyltransferase 1 is the main acetyltransferase responsible for Lys-40 acetylation in somatic cells.

Its subcellular location is the cytoplasm. The protein localises to the cytoskeleton. The catalysed reaction is GTP + H2O = GDP + phosphate + H(+). Tubulin is the major constituent of microtubules, a cylinder consisting of laterally associated linear protofilaments composed of alpha- and beta-tubulin heterodimers. Microtubules grow by the addition of GTP-tubulin dimers to the microtubule end, where a stabilizing cap forms. Below the cap, tubulin dimers are in GDP-bound state, owing to GTPase activity of alpha-tubulin. This Drosophila melanogaster (Fruit fly) protein is Tubulin alpha-1 chain (alphaTub84B).